Here is a 618-residue protein sequence, read N- to C-terminus: Probable peptide transporter ptr2 (618 aa).

S22 bears the Phosphoserine mark. A Phosphotyrosine modification is found at Y23. Phosphoserine is present on residues S25 and S33. The segment at 26–50 (KEKKADGSATINTADEQSSTDELQK) is disordered. The span at 34 to 50 (ATINTADEQSSTDELQK) shows a compositional bias: polar residues. T35 carries the post-translational modification Phosphothreonine. A Phosphoserine modification is found at S44. T45 bears the Phosphothreonine mark. S51 and S53 each carry phosphoserine. The residue at position 54 (T54) is a Phosphothreonine. A run of 10 helical transmembrane segments spans residues 131 to 151 (GLSN…ALIA), 161 to 181 (IVCS…TAIP), 187 to 207 (GKSM…TGGI), 247 to 267 (YMIF…TTSL), 273 to 293 (FVYA…ILAV), 400 to 420 (FDSI…YPLL), 430 to 450 (ILRI…AAVL), 475 to 495 (VWIQ…ASIT), 510 to 530 (SIIT…SICI), and 541 to 561 (WMYT…WVCF). S594 is subject to Phosphoserine. T618 bears the Phosphothreonine mark.

The protein belongs to the major facilitator superfamily. Proton-dependent oligopeptide transporter (POT/PTR) (TC 2.A.17) family.

It is found in the membrane. In terms of biological role, uptake of small peptides. In Schizosaccharomyces pombe (strain 972 / ATCC 24843) (Fission yeast), this protein is Probable peptide transporter ptr2 (ptr2).